A 528-amino-acid polypeptide reads, in one-letter code: UDP-glucuronosyltransferase 2A1 (528 aa).

The first 21 residues, 1-21 (MLKNILLCSLQISLLGMSLGG), serve as a signal peptide directing secretion. Residues 22–494 (NVLIWPMEGS…FQYHSLDVIG (473 aa)) are Extracellular-facing. N49 is a glycosylation site (N-linked (GlcNAc...) asparagine). Residue K135 is modified to N6-succinyllysine. N-linked (GlcNAc...) asparagine glycosylation occurs at N314. A helical membrane pass occupies residues 495 to 515 (FLLACVASAILLVAKCCLFIF). The Cytoplasmic segment spans residues 516–528 (QKVGKTGKKKKRD).

The protein belongs to the UDP-glycosyltransferase family.

The protein resides in the membrane. The enzyme catalyses glucuronate acceptor + UDP-alpha-D-glucuronate = acceptor beta-D-glucuronoside + UDP + H(+). It catalyses the reaction 16beta,17beta-estriol + UDP-alpha-D-glucuronate = 16beta,17beta-estriol 16-O-(beta-D-glucuronate) + UDP + H(+). It carries out the reaction 16alpha,17alpha-estriol + UDP-alpha-D-glucuronate = 16alpha,17alpha-estriol 16-O-(beta-D-glucuronate) + UDP + H(+). The catalysed reaction is 17alpha-estradiol + UDP-alpha-D-glucuronate = 17alpha-estradiol 17-O-(beta-D-glucuronate) + UDP + H(+). The enzyme catalyses 17alpha-estradiol + UDP-alpha-D-glucuronate = 17alpha-estradiol 3-O-(beta-D-glucuronate) + UDP + H(+). It catalyses the reaction 17beta-estradiol + UDP-alpha-D-glucuronate = 17beta-estradiol 3-O-(beta-D-glucuronate) + UDP + H(+). It carries out the reaction 17beta-estradiol + UDP-alpha-D-glucuronate = 17beta-estradiol 17-O-(beta-D-glucuronate) + UDP + H(+). The catalysed reaction is testosterone + UDP-alpha-D-glucuronate = testosterone 17-O-(beta-D-glucuronate) + UDP + H(+). The enzyme catalyses epitestosterone + UDP-alpha-D-glucuronate = epitestosterone 17-O-(beta-D-glucuronate) + UDP + H(+). It catalyses the reaction lithocholate + UDP-alpha-D-glucuronate = lithocholoyl-3-O-(beta-D-glucuronate) + UDP + H(+). It carries out the reaction lithocholate + UDP-alpha-D-glucuronate = lithocholoyl-24-O-(beta-D-glucuronate) + UDP. The catalysed reaction is deoxycholate + UDP-alpha-D-glucuronate = deoxycholoyl-24-O-(beta-D-glucuronate) + UDP. The enzyme catalyses hyodeoxycholate + UDP-alpha-D-glucuronate = hyodeoxycholate 6-O-(beta-D-glucuronate) + UDP + H(+). It catalyses the reaction hyocholate + UDP-alpha-D-glucuronate = hyocholoyl-24-O-(beta-D-glucuronate) + UDP. UDP-glucuronosyltransferase (UGT) that catalyzes phase II biotransformation reactions in which lipophilic substrates are conjugated with glucuronic acid to increase the metabolite's water solubility, thereby facilitating excretion into either the urine or bile. Essential for the elimination and detoxification of drugs, xenobiotics and endogenous compounds. Catalyzes the glucuronidation of endogenous steroid hormones such as androgens (testosterones) and estrogens (estradiol and estriol). Contributes to bile acid (BA) detoxification by catalyzing the glucuronidation of BA substrates, which are natural detergents for dietary lipids absorption. Shows a high affinity to aliphatic odorants such as citronellol as well as olfactory tissue specificity, and therefore may be involved in olfaction. This Mus musculus (Mouse) protein is UDP-glucuronosyltransferase 2A1.